A 214-amino-acid polypeptide reads, in one-letter code: ATP-dependent Clp protease proteolytic subunit (214 aa).

Ser110 (nucleophile) is an active-site residue. The active site involves His135.

The protein belongs to the peptidase S14 family. Fourteen ClpP subunits assemble into 2 heptameric rings which stack back to back to give a disk-like structure with a central cavity, resembling the structure of eukaryotic proteasomes.

The protein localises to the cytoplasm. It catalyses the reaction Hydrolysis of proteins to small peptides in the presence of ATP and magnesium. alpha-casein is the usual test substrate. In the absence of ATP, only oligopeptides shorter than five residues are hydrolyzed (such as succinyl-Leu-Tyr-|-NHMec, and Leu-Tyr-Leu-|-Tyr-Trp, in which cleavage of the -Tyr-|-Leu- and -Tyr-|-Trp bonds also occurs).. Its function is as follows. Cleaves peptides in various proteins in a process that requires ATP hydrolysis. Has a chymotrypsin-like activity. Plays a major role in the degradation of misfolded proteins. In Legionella pneumophila (strain Paris), this protein is ATP-dependent Clp protease proteolytic subunit.